We begin with the raw amino-acid sequence, 363 residues long: MSPSIVFTGGGTAGHVTPNIALIKEFRKEGWNVEYIGSVSGIEKEMIEPLDIPFHGVSSGKLRRYFSLKNLLDPFKIVLGIIQSSLLFYKIKPDVVFSKGGFVAFPVVVGAWLNRIPVVAHESDMSPGLANRLSFPFVNKICLTFDAGKKYFKRQDKIEVTGTPIRQQLLTGNRMKGLELCGFNSSKPCLLVVGGSLGAGSINSCIRSALKQLTSEFQVIHLCGKGKLDSSLVGVEGYCQFEYANEELADLFAASSVVISRAGANSLYEILALGKPHILIPISSQVSRGDQIQNARYFQGLGISVVIQDELLKADVLLQAVQDVMRKKDEIDNKIKALKIESATDKIVAIIKEQAHVQTPRIV.

UDP-N-acetyl-alpha-D-glucosamine-binding positions include 12-14 (TAG), R166, S196, and Q291.

This sequence belongs to the glycosyltransferase 28 family. MurG subfamily.

The protein localises to the cell inner membrane. It catalyses the reaction di-trans,octa-cis-undecaprenyl diphospho-N-acetyl-alpha-D-muramoyl-L-alanyl-D-glutamyl-meso-2,6-diaminopimeloyl-D-alanyl-D-alanine + UDP-N-acetyl-alpha-D-glucosamine = di-trans,octa-cis-undecaprenyl diphospho-[N-acetyl-alpha-D-glucosaminyl-(1-&gt;4)]-N-acetyl-alpha-D-muramoyl-L-alanyl-D-glutamyl-meso-2,6-diaminopimeloyl-D-alanyl-D-alanine + UDP + H(+). Its pathway is cell wall biogenesis; peptidoglycan biosynthesis. In terms of biological role, cell wall formation. Catalyzes the transfer of a GlcNAc subunit on undecaprenyl-pyrophosphoryl-MurNAc-pentapeptide (lipid intermediate I) to form undecaprenyl-pyrophosphoryl-MurNAc-(pentapeptide)GlcNAc (lipid intermediate II). This Legionella pneumophila (strain Paris) protein is UDP-N-acetylglucosamine--N-acetylmuramyl-(pentapeptide) pyrophosphoryl-undecaprenol N-acetylglucosamine transferase.